A 425-amino-acid chain; its full sequence is Metacaspase-1 (425 aa).

The tract at residues 1-110 (MSYNSNPYNG…PQLPNTQTQS (110 aa)) is disordered. The span at 13-28 (YPPYNTYTRPNYSPNN) shows a compositional bias: low complexity. 2 stretches are compositionally biased toward polar residues: residues 29-38 (GSQSNNTVHQ) and 88-110 (TGAN…QTQS). Catalysis depends on residues His-214 and Cys-270.

This sequence belongs to the peptidase C14B family.

It localises to the cytoplasm. It is found in the nucleus. Involved in cell death (apoptosis). The polypeptide is Metacaspase-1 (pca1) (Schizosaccharomyces pombe (strain 972 / ATCC 24843) (Fission yeast)).